A 221-amino-acid polypeptide reads, in one-letter code: Ependymin-2 (221 aa).

The N-terminal stretch at Met1–Ala21 is a signal peptide. Asn33, Asn73, and Asn97 each carry an N-linked (GlcNAc...) asparagine glycan.

This sequence belongs to the ependymin family. Post-translationally, binds calcium through the terminal sialic acids. EPDs are synthesized in the meninx and secreted in the cerebrospinal fluid.

It is found in the secreted. Functionally, may play a role in neural plasticity. May be involved during axon regeneration. The sequence is that of Ependymin-2 (epd2) from Salmo salar (Atlantic salmon).